Reading from the N-terminus, the 187-residue chain is Putative manganese efflux pump MntP (187 aa).

A run of 6 helical transmembrane segments spans residues 3-23, 39-59, 65-85, 103-123, 124-144, and 166-186; these read WLTILGISVALAMDAFAVALA, LGFHFGLFQALMPIGGWLLGM, ISAYDHWIAFGLLVFVGGRMV, GMTMVMLSVATSIDAFAVGLS, IAMLGVSVWLPATVIGLVAGV, and ICGGLVLCLIGLKILLEHTLL.

This sequence belongs to the MntP (TC 9.B.29) family.

The protein localises to the cell inner membrane. In terms of biological role, probably functions as a manganese efflux pump. The polypeptide is Putative manganese efflux pump MntP (Geobacter sp. (strain M21)).